Consider the following 377-residue polypeptide: Subtilisin-like protease CPC735_012930 (377 aa).

A signal peptide spans 1 to 20 (MSILFKIFASTLAVVSVVNA). Residues 21 to 118 (GELLNFENER…VEPDRMASAT (98 aa)) constitute a propeptide that is removed on maturation. Residues 36-114 (SYIVVMKDGT…HVKYVEPDRM (79 aa)) form the Inhibitor I9 domain. One can recognise a Peptidase S8 domain in the interval 128–377 (SWGLGRISHT…NKLLYNKSGF (250 aa)). Active-site charge relay system residues include Asp160 and His191. An N-linked (GlcNAc...) asparagine glycan is attached at Asn252. Ser323 functions as the Charge relay system in the catalytic mechanism. N-linked (GlcNAc...) asparagine glycans are attached at residues Asn364 and Asn373.

Belongs to the peptidase S8 family.

The protein localises to the secreted. Functionally, secreted subtilisin-like serine protease with keratinolytic activity that contributes to pathogenicity. The sequence is that of Subtilisin-like protease CPC735_012930 from Coccidioides posadasii (strain C735) (Valley fever fungus).